A 142-amino-acid chain; its full sequence is 3-hydroxyacyl-[acyl-carrier-protein] dehydratase FabZ (142 aa).

His-49 is an active-site residue.

It belongs to the thioester dehydratase family. FabZ subfamily.

It is found in the cytoplasm. The catalysed reaction is a (3R)-hydroxyacyl-[ACP] = a (2E)-enoyl-[ACP] + H2O. Its function is as follows. Involved in unsaturated fatty acids biosynthesis. Catalyzes the dehydration of short chain beta-hydroxyacyl-ACPs and long chain saturated and unsaturated beta-hydroxyacyl-ACPs. The polypeptide is 3-hydroxyacyl-[acyl-carrier-protein] dehydratase FabZ (Deinococcus geothermalis (strain DSM 11300 / CIP 105573 / AG-3a)).